The sequence spans 215 residues: Pyrophosphate-energized proton pump 2 (215 aa).

Helical transmembrane passes span 16–36 (VYPL…TFFV), 51–71 (GLIA…YATV), 86–106 (GTNL…IVVI), 136–156 (GLAV…GGII), and 164–184 (LFGT…IVAL).

The protein belongs to the H(+)-translocating pyrophosphatase (TC 3.A.10) family. Homodimer. Mg(2+) is required as a cofactor.

Its subcellular location is the cell inner membrane. The enzyme catalyses diphosphate + H2O + H(+)(in) = 2 phosphate + 2 H(+)(out). In terms of biological role, proton pump that utilizes the energy of pyrophosphate hydrolysis as the driving force for proton movement across the membrane. Generates a proton motive force. This Rhizobium leguminosarum bv. trifolii protein is Pyrophosphate-energized proton pump 2 (hppA2).